A 343-amino-acid chain; its full sequence is Anthranilate phosphoribosyltransferase (343 aa).

Residues G84, 87–88 (GD), T92, 94–97 (NIST), 112–120 (KHGNRSVSS), and S124 each bind 5-phospho-alpha-D-ribose 1-diphosphate. Anthranilate is bound at residue G84. S96 provides a ligand contact to Mg(2+). N115 is a binding site for anthranilate. Anthranilate is bound at residue R170. D229 and E230 together coordinate Mg(2+).

It belongs to the anthranilate phosphoribosyltransferase family. As to quaternary structure, homodimer. It depends on Mg(2+) as a cofactor.

It carries out the reaction N-(5-phospho-beta-D-ribosyl)anthranilate + diphosphate = 5-phospho-alpha-D-ribose 1-diphosphate + anthranilate. Its pathway is amino-acid biosynthesis; L-tryptophan biosynthesis; L-tryptophan from chorismate: step 2/5. Functionally, catalyzes the transfer of the phosphoribosyl group of 5-phosphorylribose-1-pyrophosphate (PRPP) to anthranilate to yield N-(5'-phosphoribosyl)-anthranilate (PRA). The sequence is that of Anthranilate phosphoribosyltransferase from Stenotrophomonas maltophilia (strain K279a).